A 364-amino-acid polypeptide reads, in one-letter code: Anthranilate phosphoribosyltransferase (364 aa).

Over residues 1 to 10 the composition is skewed to polar residues; it reads MTSGPSQPFP. Residues 1-22 form a disordered region; sequence MTSGPSQPFPSASGPDDGPSWP. Residues Gly-101, 104–105, Thr-109, 111–114, 129–137, and Gly-141 contribute to the 5-phospho-alpha-D-ribose 1-diphosphate site; these read GD, NLST, and KHGNRAASS. Anthranilate is bound at residue Gly-101. Residue Ser-113 participates in Mg(2+) binding. Asn-132 serves as a coordination point for anthranilate. Anthranilate is bound at residue Arg-187. Mg(2+) is bound by residues Asp-245 and Glu-246.

This sequence belongs to the anthranilate phosphoribosyltransferase family. In terms of assembly, homodimer. It depends on Mg(2+) as a cofactor.

The catalysed reaction is N-(5-phospho-beta-D-ribosyl)anthranilate + diphosphate = 5-phospho-alpha-D-ribose 1-diphosphate + anthranilate. Its pathway is amino-acid biosynthesis; L-tryptophan biosynthesis; L-tryptophan from chorismate: step 2/5. Functionally, catalyzes the transfer of the phosphoribosyl group of 5-phosphorylribose-1-pyrophosphate (PRPP) to anthranilate to yield N-(5'-phosphoribosyl)-anthranilate (PRA). This is Anthranilate phosphoribosyltransferase from Mycolicibacterium smegmatis (strain ATCC 700084 / mc(2)155) (Mycobacterium smegmatis).